A 111-amino-acid polypeptide reads, in one-letter code: T cell receptor alpha variable 18 (111 aa).

A signal peptide spans 1–20 (MLSASCSGLVILLIFRRTSG). An Ig-like domain is found at 21-111 (DSVTQTEGPV…DSAVYYCALR (91 aa)). N-linked (GlcNAc...) asparagine glycosylation occurs at Asn41. Residues Cys42 and Cys108 are joined by a disulfide bond.

Alpha-beta TR is a heterodimer composed of an alpha and beta chain; disulfide-linked. The alpha-beta TR is associated with the transmembrane signaling CD3 coreceptor proteins to form the TR-CD3 (TcR or TCR). The assembly of alpha-beta TR heterodimers with CD3 occurs in the endoplasmic reticulum where a single alpha-beta TR heterodimer associates with one CD3D-CD3E heterodimer, one CD3G-CD3E heterodimer and one CD247 homodimer forming a stable octameric structure. CD3D-CD3E and CD3G-CD3E heterodimers preferentially associate with TR alpha and TR beta chains, respectively. The association of the CD247 homodimer is the last step of TcR assembly in the endoplasmic reticulum and is required for transport to the cell surface.

It is found in the cell membrane. Functionally, v region of the variable domain of T cell receptor (TR) alpha chain that participates in the antigen recognition. Alpha-beta T cell receptors are antigen specific receptors which are essential to the immune response and are present on the cell surface of T lymphocytes. Recognize peptide-major histocompatibility (MH) (pMH) complexes that are displayed by antigen presenting cells (APC), a prerequisite for efficient T cell adaptive immunity against pathogens. Binding of alpha-beta TR to pMH complex initiates TR-CD3 clustering on the cell surface and intracellular activation of LCK that phosphorylates the ITAM motifs of CD3G, CD3D, CD3E and CD247 enabling the recruitment of ZAP70. In turn ZAP70 phosphorylates LAT, which recruits numerous signaling molecules to form the LAT signalosome. The LAT signalosome propagates signal branching to three major signaling pathways, the calcium, the mitogen-activated protein kinase (MAPK) kinase and the nuclear factor NF-kappa-B (NF-kB) pathways, leading to the mobilization of transcription factors that are critical for gene expression and essential for T cell growth and differentiation. The T cell repertoire is generated in the thymus, by V-(D)-J rearrangement. This repertoire is then shaped by intrathymic selection events to generate a peripheral T cell pool of self-MH restricted, non-autoaggressive T cells. Post-thymic interaction of alpha-beta TR with the pMH complexes shapes TR structural and functional avidity. The chain is T cell receptor alpha variable 18 from Homo sapiens (Human).